Here is a 271-residue protein sequence, read N- to C-terminus: Phosphonates import ATP-binding protein PhnC 2 (271 aa).

Residues 2-245 (LVVEGLTCRF…IARELYDLEA (244 aa)) enclose the ABC transporter domain. 34–41 (GRSGAGKS) is an ATP binding site.

The protein belongs to the ABC transporter superfamily. Phosphonates importer (TC 3.A.1.9.1) family. As to quaternary structure, the complex is composed of two ATP-binding proteins (PhnC), two transmembrane proteins (PhnE) and a solute-binding protein (PhnD).

The protein localises to the cell inner membrane. It catalyses the reaction phosphonate(out) + ATP + H2O = phosphonate(in) + ADP + phosphate + H(+). Part of the ABC transporter complex PhnCDE involved in phosphonates import. Responsible for energy coupling to the transport system. This chain is Phosphonates import ATP-binding protein PhnC 2, found in Rhodopseudomonas palustris (strain BisB18).